Consider the following 40-residue polypeptide: Meleagrin (40 aa).

Pyrrolidone carboxylic acid is present on glutamine 1. Cystine bridges form between cysteine 6–cysteine 33, cysteine 12–cysteine 28, and cysteine 16–cysteine 32.

Belongs to the transferrin family.

This chain is Meleagrin, found in Meleagris gallopavo (Wild turkey).